Reading from the N-terminus, the 2329-residue chain is MANYGGHPQTEPHAIPDSILEEKSRKWKQLQGKRYSEKKKFGMSDTQKEEMPPEHVRKVIRDHGDMTSRKYRHDKRVYLGALKYMPHAVLKLLENMPMPWEQIRDVKVLYHITGAITFVNDIPRVIEPVYMAQWGTMWIMMRREKRDRRHFKRMRFPPFDDEEPPLDYADNILDVEPLEPIQMELDPEEDGAVAEWFYDHKPLATTRFVNGPTYRKWAFSIPQMSTLYRLANQLLTDLVDDNYFYLFDMKSFFTAKALNVAIPGGPKFEPLVKDLHTDEDWNEFNDINKVIIRAPIRTEYRIAFPFMYNNLISSLPVQVSWYHTPSVVFIKTEDPDLPAFYYDPLINPIVLSNLKATEENLPEGEEEDEWELPEDVRPIFEDVPLYTDNTANGLALLWAPRPFNLRSGRTRRAVDVPLVKSWYREHCPAGMPVKVRVSYQKLLKVFVLNALKHRPPKPQKRRYLFRSFKATKFFQTTTLDWVEAGLQVLRQGYNMLNLLIHRKNLNYLHLDYNFNLKPVKTLTTKERKKSRFGNAFHLCREILRLTKLVVDAHVQYRLNNVDAYQLADGLQYIFAHVGQLTGMYRYKYKLMRQVRMCKDLKHLIYYRFNTGPVGKGPGCGFWAPGWRVWLFFLRGITPLLERWLGNLLSRQFEGRHSKGVAKTVTKQRVESHFDLELRAAVMHDILDMMPDGIKQNKARVILQHLSEAWRCWKANIPWKVPGLPTPVENMILRYVKAKADWWTNSAHYNRERVRRGATVDKTVCKKNLGRLTRLYLKSEQERQHNYLKDGPYISAEEAVAIYTTTVHWLESRRFSPIPFPPLSYKHDTKLLILALERLKESYSVKNRLNQSQREELALIEQAYDNPHEALSRIKRHMLTQRAFKEVGIEFMDLYTHLIPVYDIEPLEKVTDAYLDQYLWYEADKRRLFPAWVKPGDTEPPPLLTYKWCQGLNNLQDVWETSEGECNVIMETKLEKIAEKMDLTLLNRLLRLIVDHNIADYMTSKNNVLINYKDMNHTNSFGIIRGLQFASFIVQFYGLVLDLLVLGLRRASEIAGPPQCPNEFLQFQDVATEIGHPIRLYCRYIDRVWIMFRFSADEARDLIQRYLTEHPDPNNENIVGYNNKKCWPRDARMRLMKHDVNLGRAVFWDIKNRLPRSITTVEWENSFVSVYSKDNPNMLFDMSGFECRILPKCRTANEEFVHRDGVWNLQNEVTKERTAQCFLKVDEESLSKFHNRIRQILMSSGSTTFTKIVNKWNTALIGLMTYFREAVVNTQELLDLLVKCENKIQTRIKIGLNSKMPSRFPPVVFYTPKEIGGLGMLSMGHVLIPQSDLRWMQQTEAGGVTHFRSGMSHDEDQLIPNLYRYIQPWEAEFVDSVRVWAEYALKRQEANAQNRRLTLEDLDDSWDRGIPRINTLFQKDRHTLAYDKGWRVRTEFKAYQILKQNPFWWTHQRHDGKLWNLNNYRTDMIQALGGVEGILEHTLFRGTYFPTWEGLFWERASGFEESMKFKKLTNAQRSGLNQIPNRRFTLWWSPTINRANVYVGFQVQLDLTGIFMHGKIPTLKISLIQIFRAHLWQKIHESVVMDLCQVFDQELDALEIQTVQKETIHPRKSYKMNSSCADVLLFAQYKWNVSRPSLMADSKDVMDNTTTQKYWLDVQLRWGDYDSHDVERYARAKFLDYTTDNMSIYPSPTGVLIAIDLAYNLYSAYGNWFPGMKPLIRQAMAKIIKANPAFYVLRERIRKGLQLYSSEPTEPYLTSQNYGELFSNQIIWFVDDTNVYRVTIHKTFEGNLTTKPINGAIFIFNPRTGQLFLKIIHTSVWAGQKRLSQLAKWKTAEEVAALIRSLPVEEQPRQIIVTRKAMLDPLEVHLLDFPNIVIKGSELMLPFQAIMKVEKFGDLILKATEPQMVLFNLYDDWLKTISSYTAFSRVVLIMRGMHINPDKTKVILKPDKTTITEPHHIWPTLSDDDWIKVELALKDMILADYGKKNNVNVASLTQSEVRDIILGMEISAPSQQRQQIADIEKQTKEQSQVTATTTRTVNKHGDEIITATTSNYETASFASRTEWRVRAISSTNLHLRTQHIYVNSDDVKDTGYTYILPKNILKKFITISDLRTQIAGFMYGVSPPDNPQVKEIRCIVLVPQTGSHQQVNLPTQLPDHELLRDFEPLGWMHTQPNELPQLSPQDVTTHAKLLTDNISWDGEKTVMITCSFTPGSVSLTAYKLTPSGYEWGKANTDKGNNPKGYMPTHYEKVQMLLSDRFLGYFMVPSNGVWNYNFQGQRWSPAMKFDVCLSNPKEYYHEDHRPVHFHNFKAFDDPLGTGSADREDAFA.

The interval 1–53 (MANYGGHPQTEPHAIPDSILEEKSRKWKQLQGKRYSEKKKFGMSDTQKEEMPP) is disordered. The span at 34-53 (RYSEKKKFGMSDTQKEEMPP) shows a compositional bias: basic and acidic residues. The reverse transcriptase homology domain stretch occupies residues 804–1295 (TTVHWLESRR…KIQTRIKIGL (492 aa)). The linker stretch occupies residues 1296-1570 (NSKMPSRFPP…TLKISLIQIF (275 aa)). Positions 1506–1519 (MKFKKLTNAQRSGL) are important for branch point selection. A restriction endonuclease homology domain region spans residues 1574–1745 (LWQKIHESVV…LRERIRKGLQ (172 aa)). The tract at residues 1760 to 2013 (NYGELFSNQI…ILGMEISAPS (254 aa)) is RNase H homology domain. Residues 2096–2227 (TYILPKNILK…LTAYKLTPSG (132 aa)) enclose the MPN domain.

In terms of assembly, part of the U5 snRNP complex and of the U4/U6-U5 tri-snRNP complex.

It localises to the nucleus. Functions as a scaffold that mediates the ordered assembly of spliceosomal proteins and snRNAs. Required for the assembly of the U4/U6-U5 tri-snRNP complex. Functions as a scaffold that positions spliceosomal U2, U5 and U6 snRNAs at splice sites on pre-mRNA substrates, so that splicing can occur. Interacts with both the 5' and the 3' splice site. The polypeptide is Pre-mRNA-splicing factor 8 homolog (prp-8) (Caenorhabditis elegans).